Consider the following 242-residue polypeptide: Triosephosphate isomerase (242 aa).

Position 8–10 (8–10 (NWK)) interacts with substrate. His98 functions as the Electrophile in the catalytic mechanism. The Proton acceptor role is filled by Glu167. Substrate is bound by residues Gly173, Ser205, and 226-227 (GG).

Belongs to the triosephosphate isomerase family. As to quaternary structure, homodimer.

Its subcellular location is the cytoplasm. The catalysed reaction is D-glyceraldehyde 3-phosphate = dihydroxyacetone phosphate. The protein operates within carbohydrate biosynthesis; gluconeogenesis. Its pathway is carbohydrate degradation; glycolysis; D-glyceraldehyde 3-phosphate from glycerone phosphate: step 1/1. In terms of biological role, involved in the gluconeogenesis. Catalyzes stereospecifically the conversion of dihydroxyacetone phosphate (DHAP) to D-glyceraldehyde-3-phosphate (G3P). This is Triosephosphate isomerase from Mesomycoplasma hyopneumoniae (strain 232) (Mycoplasma hyopneumoniae).